We begin with the raw amino-acid sequence, 181 residues long: NAD(P)H-quinone oxidoreductase subunit I, chloroplastic (181 aa).

4Fe-4S ferredoxin-type domains are found at residues 52 to 81 (GRIH…VDWE) and 92 to 121 (KSYS…MTEE). [4Fe-4S] cluster contacts are provided by Cys61, Cys64, Cys67, Cys71, Cys101, Cys104, Cys107, and Cys111.

It belongs to the complex I 23 kDa subunit family. As to quaternary structure, NDH is composed of at least 16 different subunits, 5 of which are encoded in the nucleus. It depends on [4Fe-4S] cluster as a cofactor.

Its subcellular location is the plastid. The protein localises to the chloroplast thylakoid membrane. The enzyme catalyses a plastoquinone + NADH + (n+1) H(+)(in) = a plastoquinol + NAD(+) + n H(+)(out). It catalyses the reaction a plastoquinone + NADPH + (n+1) H(+)(in) = a plastoquinol + NADP(+) + n H(+)(out). Functionally, NDH shuttles electrons from NAD(P)H:plastoquinone, via FMN and iron-sulfur (Fe-S) centers, to quinones in the photosynthetic chain and possibly in a chloroplast respiratory chain. The immediate electron acceptor for the enzyme in this species is believed to be plastoquinone. Couples the redox reaction to proton translocation, and thus conserves the redox energy in a proton gradient. The chain is NAD(P)H-quinone oxidoreductase subunit I, chloroplastic from Staurastrum punctulatum (Green alga).